The primary structure comprises 163 residues: Photosystem II extrinsic protein V (163 aa).

The first 26 residues, 1–26, serve as a signal peptide directing secretion; that stretch reads MLRKLILITVATVFFACQLLVNPVSA. Heme c contacts are provided by C63, C66, H67, and H118.

The protein belongs to the cytochrome c family. PsbV subfamily. As to quaternary structure, PSII is composed of 1 copy each of membrane proteins PsbA, PsbB, PsbC, PsbD, PsbE, PsbF, PsbH, PsbI, PsbJ, PsbK, PsbL, PsbM, PsbT, PsbX, PsbY, PsbZ, Psb30/Ycf12, peripheral proteins PsbO, CyanoQ (PsbQ), PsbU, PsbV and a large number of cofactors. It forms dimeric complexes. Requires heme c as cofactor.

Its subcellular location is the cellular thylakoid membrane. Functionally, one of the extrinsic, lumenal subunits of photosystem II (PSII). PSII is a light-driven water plastoquinone oxidoreductase, using light energy to abstract electrons from H(2)O, generating a proton gradient subsequently used for ATP formation. The extrinsic proteins stabilize the structure of photosystem II oxygen-evolving complex (OEC), the ion environment of oxygen evolution and protect the OEC against heat-induced inactivation. Low-potential cytochrome c that plays a role in the OEC of PSII. This Aphanothece halophytica protein is Photosystem II extrinsic protein V.